We begin with the raw amino-acid sequence, 205 residues long: Small ribosomal subunit protein uS4 (205 aa).

The 64-residue stretch at 94-157 (SRLDTVVYRM…QQIPLIQESI (64 aa)) folds into the S4 RNA-binding domain.

The protein belongs to the universal ribosomal protein uS4 family. In terms of assembly, part of the 30S ribosomal subunit. Contacts protein S5. The interaction surface between S4 and S5 is involved in control of translational fidelity.

In terms of biological role, one of the primary rRNA binding proteins, it binds directly to 16S rRNA where it nucleates assembly of the body of the 30S subunit. Functionally, with S5 and S12 plays an important role in translational accuracy. The protein is Small ribosomal subunit protein uS4 of Rickettsia prowazekii (strain Madrid E).